Here is a 189-residue protein sequence, read N- to C-terminus: Peptidyl-tRNA hydrolase (189 aa).

Tyrosine 15 lines the tRNA pocket. Catalysis depends on histidine 20, which acts as the Proton acceptor. 3 residues coordinate tRNA: phenylalanine 66, asparagine 68, and asparagine 114.

This sequence belongs to the PTH family. In terms of assembly, monomer.

It is found in the cytoplasm. It catalyses the reaction an N-acyl-L-alpha-aminoacyl-tRNA + H2O = an N-acyl-L-amino acid + a tRNA + H(+). In terms of biological role, hydrolyzes ribosome-free peptidyl-tRNAs (with 1 or more amino acids incorporated), which drop off the ribosome during protein synthesis, or as a result of ribosome stalling. Catalyzes the release of premature peptidyl moieties from peptidyl-tRNA molecules trapped in stalled 50S ribosomal subunits, and thus maintains levels of free tRNAs and 50S ribosomes. The polypeptide is Peptidyl-tRNA hydrolase (Streptococcus suis (strain 98HAH33)).